The sequence spans 286 residues: tRNA (guanine-N(7)-)-methyltransferase (286 aa).

Residues Met-1 to Glu-21 form a disordered region. S-adenosyl-L-methionine-binding residues include Glu-91, Glu-116, Asn-143, and Asp-165. The active site involves Asp-165. Substrate is bound by residues Lys-169, Asp-201, and Thr-262 to Glu-265.

The protein belongs to the class I-like SAM-binding methyltransferase superfamily. TrmB family.

It carries out the reaction guanosine(46) in tRNA + S-adenosyl-L-methionine = N(7)-methylguanosine(46) in tRNA + S-adenosyl-L-homocysteine. It participates in tRNA modification; N(7)-methylguanine-tRNA biosynthesis. Functionally, catalyzes the formation of N(7)-methylguanine at position 46 (m7G46) in tRNA. The sequence is that of tRNA (guanine-N(7)-)-methyltransferase from Bifidobacterium longum (strain NCC 2705).